The chain runs to 119 residues: Beta-2-microglobulin (119 aa).

A signal peptide spans 1-20; sequence MARFVVVALLVLLSVSDLEA. An Ig-like C1-type domain is found at 25–114; that stretch reads PKIQVYSRYP…VTFLTPKTVK (90 aa). A disulfide bridge links C45 with C100.

It belongs to the beta-2-microglobulin family. In terms of assembly, heterodimer of an alpha chain and a beta chain. Beta-2-microglobulin is the beta-chain of major histocompatibility complex class I molecules.

It is found in the secreted. Component of the class I major histocompatibility complex (MHC). Involved in the presentation of peptide antigens to the immune system. This chain is Beta-2-microglobulin (B2M), found in Leontocebus fuscicollis (Brown-mantled tamarin).